Here is a 505-residue protein sequence, read N- to C-terminus: T-cell activation GTPase-activating protein 1 (505 aa).

5 disordered regions span residues 81–147 (DDSL…SESS), 160–212 (QQDR…DPFT), 242–293 (QGHI…QREI), 311–339 (RTSS…SQLS), and 414–441 (KPST…HRLS). The span at 90–102 (SDVSTLQNDSAYD) shows a compositional bias: polar residues. Positions 203-212 (EGDEAEDPFT) are enriched in acidic residues. Positions 250-262 (SRSSPGESLGSSP) are enriched in low complexity. Composition is skewed to basic and acidic residues over residues 283 to 292 (KTDKTKPQRE) and 318 to 336 (EKSK…RKES).

In Mus musculus (Mouse), this protein is T-cell activation GTPase-activating protein 1 (Tagap1).